The following is a 237-amino-acid chain: Listeriolysin regulatory protein (237 aa).

One can recognise an HTH crp-type domain in the interval 137 to 212 (NGKLGSICGQ…NSCFYVQNLD (76 aa)).

Its function is as follows. Positively regulates expression of listeriolysin, of 1-phosphadidylinositol phosphodiesterase (PI-PLC) and other virulence factors. The polypeptide is Listeriolysin regulatory protein (prfA) (Listeria monocytogenes serovar 1/2a (strain ATCC BAA-679 / EGD-e)).